Reading from the N-terminus, the 139-residue chain is uncharacterized protein (139 aa).

This is an uncharacterized protein from Saccharomyces cerevisiae (strain ATCC 204508 / S288c) (Baker's yeast).